A 585-amino-acid polypeptide reads, in one-letter code: Arginine--tRNA ligase (585 aa).

Positions 126 to 136 (PNIAKEMHVGH) match the 'HIGH' region motif.

This sequence belongs to the class-I aminoacyl-tRNA synthetase family. In terms of assembly, monomer.

The protein resides in the cytoplasm. The enzyme catalyses tRNA(Arg) + L-arginine + ATP = L-arginyl-tRNA(Arg) + AMP + diphosphate. This is Arginine--tRNA ligase from Cyanothece sp. (strain PCC 7425 / ATCC 29141).